Consider the following 157-residue polypeptide: Galactose-specific lectin (157 aa).

Positions 12-157 constitute a Jacalin-type lectin domain; sequence SIVVGTWGAE…LDYIGFHLAL (146 aa). An N-linked (GlcNAc...) asparagine glycan is attached at Asn-45.

It belongs to the jacalin lectin family. As to quaternary structure, tetramer of heterodimers of light and heavy chains which are non-covalently linked. N-linked carbohydrates at Asn-45 can be of complex or paucimannose type.

Functionally, alpha-D-galactose-specific lectin. Has hemagglutinating activity towards human and rabbit erythrocytes. Is highly cytotoxic to human cells in vitro. The sequence is that of Galactose-specific lectin from Morus indica (Mulberry).